The primary structure comprises 97 residues: Class II hydrophobin 3 (97 aa).

The N-terminal stretch at 1 to 16 (MKFFAAAALFIAGVLA) is a signal peptide. 4 cysteine pairs are disulfide-bonded: C30-C79, C40-C70, C41-C53, and C80-C91.

This sequence belongs to the cerato-ulmin hydrophobin family. As to quaternary structure, homodimer. Homodimers further self-assemble to form highly ordered films at water-air interfaces through intermolecular interactions.

It localises to the secreted. The protein resides in the cell wall. In terms of biological role, aerial growth, conidiation, and dispersal of filamentous fungi in the environment rely upon a capability of their secreting small amphipathic proteins called hydrophobins (HPBs) with low sequence identity. Class I can self-assemble into an outermost layer of rodlet bundles on aerial cell surfaces, conferring cellular hydrophobicity that supports fungal growth, development and dispersal; whereas Class II form highly ordered films at water-air interfaces through intermolecular interactions but contribute nothing to the rodlet structure. In Trichoderma asperellum (strain ATCC 204424 / CBS 433.97 / NBRC 101777), this protein is Class II hydrophobin 3.